The sequence spans 342 residues: Holliday junction branch migration complex subunit RuvB (342 aa).

Residues 1–185 (MTVKPLRDVT…FPIQERLEYY (185 aa)) are large ATPase domain (RuvB-L). Residues L24, R25, G66, K69, T70, S71, 132 to 134 (EDY), R175, Y185, and R222 contribute to the ATP site. T70 lines the Mg(2+) pocket. The interval 186-256 (GPAELKEIAV…VVDRTLRRLE (71 aa)) is small ATPAse domain (RuvB-S). The segment at 259 to 342 (ARGLDAMDRR…RSGGKQGSLV (84 aa)) is head domain (RuvB-H). 2 residues coordinate DNA: R314 and R319.

This sequence belongs to the RuvB family. As to quaternary structure, homohexamer. Forms an RuvA(8)-RuvB(12)-Holliday junction (HJ) complex. HJ DNA is sandwiched between 2 RuvA tetramers; dsDNA enters through RuvA and exits via RuvB. An RuvB hexamer assembles on each DNA strand where it exits the tetramer. Each RuvB hexamer is contacted by two RuvA subunits (via domain III) on 2 adjacent RuvB subunits; this complex drives branch migration. In the full resolvosome a probable DNA-RuvA(4)-RuvB(12)-RuvC(2) complex forms which resolves the HJ.

Its subcellular location is the cytoplasm. The catalysed reaction is ATP + H2O = ADP + phosphate + H(+). Its function is as follows. The RuvA-RuvB-RuvC complex processes Holliday junction (HJ) DNA during genetic recombination and DNA repair, while the RuvA-RuvB complex plays an important role in the rescue of blocked DNA replication forks via replication fork reversal (RFR). RuvA specifically binds to HJ cruciform DNA, conferring on it an open structure. The RuvB hexamer acts as an ATP-dependent pump, pulling dsDNA into and through the RuvAB complex. RuvB forms 2 homohexamers on either side of HJ DNA bound by 1 or 2 RuvA tetramers; 4 subunits per hexamer contact DNA at a time. Coordinated motions by a converter formed by DNA-disengaged RuvB subunits stimulates ATP hydrolysis and nucleotide exchange. Immobilization of the converter enables RuvB to convert the ATP-contained energy into a lever motion, pulling 2 nucleotides of DNA out of the RuvA tetramer per ATP hydrolyzed, thus driving DNA branch migration. The RuvB motors rotate together with the DNA substrate, which together with the progressing nucleotide cycle form the mechanistic basis for DNA recombination by continuous HJ branch migration. Branch migration allows RuvC to scan DNA until it finds its consensus sequence, where it cleaves and resolves cruciform DNA. This chain is Holliday junction branch migration complex subunit RuvB, found in Anaeromyxobacter dehalogenans (strain 2CP-C).